Here is a 240-residue protein sequence, read N- to C-terminus: Acetoacetyl-CoA reductase (240 aa).

Residues 18 to 20 (RGI) and 82 to 86 (NAGIT) each bind NADP(+). Substrate-binding positions include serine 134 and 141–144 (NVGQ). Tyrosine 147 (proton acceptor) is an active-site residue. 177 to 180 (PGFI) provides a ligand contact to NADP(+). 178 to 179 (GF) is a substrate binding site.

It belongs to the short-chain dehydrogenases/reductases (SDR) family.

The catalysed reaction is a (3R)-3-hydroxyacyl-CoA + NADP(+) = a 3-oxoacyl-CoA + NADPH + H(+). It participates in biopolymer metabolism; poly-(R)-3-hydroxybutanoate biosynthesis. Functionally, catalyzes the reduction of acetoacetyl-CoA to (R)-3-hydroxybutyryl-CoA. When expressed in E.coli with Synechocystis PhaA, PhaC and PhaE confers the ability to synthesize up to 12% (w/w) poly(3-hydroxybutyrate) (PHB) depending on the carbon source. The polypeptide is Acetoacetyl-CoA reductase (Synechocystis sp. (strain ATCC 27184 / PCC 6803 / Kazusa)).